Consider the following 223-residue polypeptide: MLEILWIALAYVLGSAPWGLVIARTFCGIDPRESGSRNTGATNVARLCGFGWGVATLLCDVLKGAVPVWLAFRINASPVFVSMVALACVLGHVFSCFMKFRGGKAVATSIGIFLPLAFWQLLASSLLCMLVIWRSGFVSLGSLTLVTALPVALAVSGQWGWLPLSLAVWAVVVWKHRENIVRLRSGTEKSWLKSKNKGAAAGNAAEGDDTQNMNPQDAGRKDG.

Helical transmembrane passes span 2–22, 52–72, 78–98, 112–132, and 153–173; these read LEIL…GLVI, WGVA…WLAF, PVFV…SCFM, IFLP…MLVI, and LAVS…AVVV. The interval 191–223 is disordered; it reads WLKSKNKGAAAGNAAEGDDTQNMNPQDAGRKDG.

It belongs to the PlsY family. In terms of assembly, probably interacts with PlsX.

The protein localises to the cell inner membrane. The catalysed reaction is an acyl phosphate + sn-glycerol 3-phosphate = a 1-acyl-sn-glycero-3-phosphate + phosphate. It participates in lipid metabolism; phospholipid metabolism. Functionally, catalyzes the transfer of an acyl group from acyl-phosphate (acyl-PO(4)) to glycerol-3-phosphate (G3P) to form lysophosphatidic acid (LPA). This enzyme utilizes acyl-phosphate as fatty acyl donor, but not acyl-CoA or acyl-ACP. This is Glycerol-3-phosphate acyltransferase from Desulfovibrio desulfuricans (strain ATCC 27774 / DSM 6949 / MB).